The following is a 341-amino-acid chain: Beta-hexosaminidase (341 aa).

Residues D61, R69, R134, and 164–165 (KH) each bind substrate. H177 acts as the Proton donor/acceptor in catalysis. Residue D249 is the Nucleophile of the active site.

It belongs to the glycosyl hydrolase 3 family. NagZ subfamily.

It is found in the cytoplasm. The enzyme catalyses Hydrolysis of terminal non-reducing N-acetyl-D-hexosamine residues in N-acetyl-beta-D-hexosaminides.. It participates in cell wall biogenesis; peptidoglycan recycling. Functionally, plays a role in peptidoglycan recycling by cleaving the terminal beta-1,4-linked N-acetylglucosamine (GlcNAc) from peptide-linked peptidoglycan fragments, giving rise to free GlcNAc, anhydro-N-acetylmuramic acid and anhydro-N-acetylmuramic acid-linked peptides. This Shewanella frigidimarina (strain NCIMB 400) protein is Beta-hexosaminidase.